A 136-amino-acid polypeptide reads, in one-letter code: Salivary protein 15 Iric-2 (136 aa).

The signal sequence occupies residues 1-22 (MESFVAMKVVCIVLLFVIAAEA). Asparagine 105 is a glycosylation site (N-linked (GlcNAc...) asparagine). Residues 117–136 (GPKNQTCENKDQCVPHIPGC) are CD4-binding.

Belongs to the salp15 family. In terms of assembly, interacts with host CD4. Interacts with host DC-SIGN (CD209). Interacts with Borrelia outer surface protein C (OspC). As to expression, expressed in salivary glands. Detected in fed adult female.

Its subcellular location is the secreted. Its function is as follows. Salivary tick protein that downregulates host immune system by binding to both dendritic cells, and CD4(+) T cells. Specifically binds to the CD4 coreceptor on T cells. This interaction prevents the activation of the Src kinase, Lck, and its downstream substrate Zap-70, and results in deficient activation of PLCgamma1, the repression of calcium fluxes triggered by T-cell antigen receptor (TCR) ligation, and a subsequent reduction in interleukin-2 production. This salivary protein also binds to DC-SIGN (CD209) on dendritic cells (DC) and activates the Raf-1 kinase/MEK signaling pathway that results in down-regulating expression of pro-inflammatory cytokines. Furthermore, it inhibits T cell proliferation induced by DCs. In addition, it inhibits in vitro keratinocyte inflammation induced by Borrelia burgdorferi or by the major outer surface protein (OspC) of Borrelia. In addition, it downregulates chemokines and monocyte chemoattractant protein 1, as well as several antimicrobial peptides such as defensins, cathelicidin, psoriasin, and RNase 7. Apart from its immunomodulatory activities, it is also associated with protection of Borrelia spirochetes from antibody-mediated killing through its binding to OspC. In vivo, tests on different immune disease animal models show promising therapeutic results, e.g., in inhibiting HIV infection, experimental autoimmune encephalomyelitis, transplantation rejection, and asthma. This chain is Salivary protein 15 Iric-2, found in Ixodes ricinus (Common tick).